Reading from the N-terminus, the 255-residue chain is DASH complex subunit SPC34 (255 aa).

Residues 53 to 81 form a disordered region; that stretch reads LFSVPPPPPRQTTLTAEQQQQQKPSNRRQ. Polar residues predominate over residues 63–81; it reads QTTLTAEQQQQQKPSNRRQ. Residues 176 to 248 adopt a coiled-coil conformation; it reads LAYYEAKIAE…QARLRALDAD (73 aa).

The protein belongs to the DASH complex SPC34 family. As to quaternary structure, component of the DASH complex consisting of ASK1, DAD1, DAD2, DAD3, DAD4, DAM1, DUO1, HSK3, SPC19 and SPC34, with a stoichiometry of one copy of each subunit per complex. Multiple DASH complexes oligomerize to form a ring that encircles spindle microtubules and organizes the rod-like NDC80 complexes of the outer kinetochore of the outer kinetochore. DASH complex oligomerization strengthens microtubule attachments. On cytoplasmic microtubules, DASH complexes appear to form patches instead of rings.

The protein localises to the nucleus. Its subcellular location is the cytoplasm. It localises to the cytoskeleton. The protein resides in the spindle. It is found in the chromosome. The protein localises to the centromere. Its subcellular location is the kinetochore. Its function is as follows. Component of the DASH complex that connects microtubules with kinetochores and couples microtubule depolymerisation to chromosome movement; it is involved in retrieving kinetochores to the spindle poles before their re-orientation on the spindle in early mitosis and allows microtubule depolymerization to pull chromosomes apart and resist detachment during anaphase. Kinetochores, consisting of a centromere-associated inner segment and a microtubule-contacting outer segment, play a crucial role in chromosome segregation by mediating the physical connection between centromeric DNA and microtubules. Kinetochores also serve as an input point for the spindle assembly checkpoint, which delays anaphase until all chromosomes have bioriented on the mitotic spindle. The chain is DASH complex subunit SPC34 from Chaetomium thermophilum (strain DSM 1495 / CBS 144.50 / IMI 039719) (Thermochaetoides thermophila).